We begin with the raw amino-acid sequence, 299 residues long: Ribosomal RNA small subunit methyltransferase H (299 aa).

S-adenosyl-L-methionine-binding positions include 36-38 (GGH), D55, Y82, D103, and Q110. Basic and acidic residues-rich tracts occupy residues 269–282 (PVRP…ENPR) and 289–299 (RAAERIEEGGD). The segment at 269-299 (PVRPSEEEIRENPRARSGRLRAAERIEEGGD) is disordered.

Belongs to the methyltransferase superfamily. RsmH family.

It localises to the cytoplasm. The enzyme catalyses cytidine(1402) in 16S rRNA + S-adenosyl-L-methionine = N(4)-methylcytidine(1402) in 16S rRNA + S-adenosyl-L-homocysteine + H(+). Its function is as follows. Specifically methylates the N4 position of cytidine in position 1402 (C1402) of 16S rRNA. This Thermotoga maritima (strain ATCC 43589 / DSM 3109 / JCM 10099 / NBRC 100826 / MSB8) protein is Ribosomal RNA small subunit methyltransferase H.